The following is a 2298-amino-acid chain: Protein Ycf2 (2298 aa).

1638–1645 is a binding site for ATP; it reads GSIGTGRS.

It belongs to the Ycf2 family.

It is found in the plastid. It localises to the chloroplast stroma. Probable ATPase of unknown function. Its presence in a non-photosynthetic plant (Epifagus virginiana) and experiments in tobacco indicate that it has an essential function which is probably not related to photosynthesis. The chain is Protein Ycf2 from Gossypium barbadense (Sea Island cotton).